The chain runs to 157 residues: Small ribosomal subunit protein uS7 (157 aa).

It belongs to the universal ribosomal protein uS7 family. Part of the 30S ribosomal subunit. Contacts proteins S9 and S11.

One of the primary rRNA binding proteins, it binds directly to 16S rRNA where it nucleates assembly of the head domain of the 30S subunit. Is located at the subunit interface close to the decoding center, probably blocks exit of the E-site tRNA. This Paracidovorax citrulli (strain AAC00-1) (Acidovorax citrulli) protein is Small ribosomal subunit protein uS7.